Reading from the N-terminus, the 443-residue chain is Xaa-Pro dipeptidase (443 aa).

5 residues coordinate Mn(2+): Asp246, Asp257, His339, Glu384, and Glu423.

This sequence belongs to the peptidase M24B family. Bacterial-type prolidase subfamily. The cofactor is Mn(2+).

The catalysed reaction is Xaa-L-Pro dipeptide + H2O = an L-alpha-amino acid + L-proline. Splits dipeptides with a prolyl residue in the C-terminal position. The chain is Xaa-Pro dipeptidase from Escherichia coli O81 (strain ED1a).